Consider the following 546-residue polypeptide: Alkaline phosphatase PafA (546 aa).

The first 25 residues, 1–25 (MLTPKKWLLGVLVVSGMLGAQKTNA), serve as a signal peptide directing secretion. 2 residues coordinate Zn(2+): D38 and T79. The Phosphothreonine intermediate role is filled by T79. Substrate-binding positions include N100 and 162-164 (KDR). Zn(2+) is bound by residues D305, H309, D352, H353, and H486.

Requires Zn(2+) as cofactor.

Its subcellular location is the periplasm. The enzyme catalyses a phosphate monoester + H2O = an alcohol + phosphate. With respect to regulation, strongly inhibited by orthovanadate and EDTA. Also inhibited by inorganic phosphate. Its function is as follows. Alkaline phosphatase with broad substrate specificity. Has phosphatase activity towards nucleotide phosphates with a preference for ATP. Active towards a great variety of phosphomonoesters with the exception of 2',3'-cyclic AMP and myo-inositol hexakisphosphate. The protein is Alkaline phosphatase PafA of Elizabethkingia meningoseptica (Chryseobacterium meningosepticum).